The chain runs to 397 residues: Succinyl-diaminopimelate desuccinylase (397 aa).

Residue His73 coordinates Zn(2+). Asp75 is a catalytic residue. Asp106 provides a ligand contact to Zn(2+). Catalysis depends on Glu140, which acts as the Proton acceptor. Residues Glu141, Glu169, and His366 each contribute to the Zn(2+) site.

This sequence belongs to the peptidase M20A family. DapE subfamily. As to quaternary structure, homodimer. It depends on Zn(2+) as a cofactor. The cofactor is Co(2+).

The catalysed reaction is N-succinyl-(2S,6S)-2,6-diaminopimelate + H2O = (2S,6S)-2,6-diaminopimelate + succinate. It participates in amino-acid biosynthesis; L-lysine biosynthesis via DAP pathway; LL-2,6-diaminopimelate from (S)-tetrahydrodipicolinate (succinylase route): step 3/3. Catalyzes the hydrolysis of N-succinyl-L,L-diaminopimelic acid (SDAP), forming succinate and LL-2,6-diaminopimelate (DAP), an intermediate involved in the bacterial biosynthesis of lysine and meso-diaminopimelic acid, an essential component of bacterial cell walls. The protein is Succinyl-diaminopimelate desuccinylase of Rhizobium johnstonii (strain DSM 114642 / LMG 32736 / 3841) (Rhizobium leguminosarum bv. viciae).